The chain runs to 689 residues: UvrABC system protein C (689 aa).

The segment covering 1–19 (MTSDSSDTAKQIGSGQPSG) has biased composition (polar residues). The segment at 1–59 (MTSDSSDTAKQIGSGQPSGSPADMRRRDGVAPEQEVDPASLETDEDDEARLPDLPDEPV) is disordered. Acidic residues predominate over residues 42-59 (ETDEDDEARLPDLPDEPV). The 79-residue stretch at 83–161 (TSPGVYRMMN…IKQLRPRFNV (79 aa)) folds into the GIY-YIG domain. Residues 271–306 (RAVKEDLARAMEQAAADLAFERAALYRDRLAALSAI) form the UVR domain.

This sequence belongs to the UvrC family. Interacts with UvrB in an incision complex.

The protein resides in the cytoplasm. Functionally, the UvrABC repair system catalyzes the recognition and processing of DNA lesions. UvrC both incises the 5' and 3' sides of the lesion. The N-terminal half is responsible for the 3' incision and the C-terminal half is responsible for the 5' incision. The chain is UvrABC system protein C from Nitrobacter winogradskyi (strain ATCC 25391 / DSM 10237 / CIP 104748 / NCIMB 11846 / Nb-255).